The sequence spans 305 residues: Acetylglutamate kinase (305 aa).

Residues 67 to 68 (GG), R89, and N190 each bind substrate.

Belongs to the acetylglutamate kinase family. ArgB subfamily.

The protein localises to the cytoplasm. It carries out the reaction N-acetyl-L-glutamate + ATP = N-acetyl-L-glutamyl 5-phosphate + ADP. It functions in the pathway amino-acid biosynthesis; L-arginine biosynthesis; N(2)-acetyl-L-ornithine from L-glutamate: step 2/4. In terms of biological role, catalyzes the ATP-dependent phosphorylation of N-acetyl-L-glutamate. The chain is Acetylglutamate kinase from Bifidobacterium animalis subsp. lactis (strain AD011).